Consider the following 256-residue polypeptide: uncharacterized protein (256 aa).

The segment at 211 to 256 is disordered; the sequence is RKLQASVTTTPPKRCKLADRPAQTTQDTPRAPQPAPVRAQRPLFTL. Positions 246–256 are enriched in low complexity; sequence PVRAQRPLFTL.

This is an uncharacterized protein from Orgyia pseudotsugata (Douglas-fir tussock moth).